The sequence spans 337 residues: Tryptophan--tRNA ligase (337 aa).

ATP-binding positions include 9-11 and 17-18; these read RPT and GH. The 'HIGH' region signature appears at 10 to 18; sequence PTGRLHLGH. Asp137 is an L-tryptophan binding site. ATP-binding positions include 149-151, Leu187, and 195-199; these read GKD and KMSKS. The 'KMSKS' region signature appears at 195 to 199; the sequence is KMSKS.

Belongs to the class-I aminoacyl-tRNA synthetase family. In terms of assembly, homodimer.

It localises to the cytoplasm. The enzyme catalyses tRNA(Trp) + L-tryptophan + ATP = L-tryptophyl-tRNA(Trp) + AMP + diphosphate + H(+). Functionally, catalyzes the attachment of tryptophan to tRNA(Trp). In Treponema pallidum (strain Nichols), this protein is Tryptophan--tRNA ligase.